The chain runs to 626 residues: uncharacterized protein (626 aa).

A helical transmembrane segment spans residues alanine 103–alanine 123. The 419-residue stretch at phenylalanine 200 to leucine 618 folds into the Protein kinase domain. ATP is bound by residues valine 206–valine 214 and lysine 311. The Proton acceptor role is filled by aspartate 445.

Belongs to the protein kinase superfamily. ADCK protein kinase family.

It is found in the mitochondrion. The protein localises to the membrane. Functionally, the function of this protein is not yet clear. It is not known if it has protein kinase activity and what type of substrate it would phosphorylate (Ser, Thr or Tyr). Involved in the mitochondrial import of CoQ precursors, plays a role in muscle mitochondrial function and fatty acid beta-oxidation. This is an uncharacterized protein from Homo sapiens (Human).